The primary structure comprises 1461 residues: DNA topoisomerase 2 (1461 aa).

Residues 1 to 17 show a composition bias toward acidic residues; sequence MSESESDYFTDGSEDDF. The interval 1–61 is disordered; the sequence is MSESESDYFT…TPKPTNASET (61 aa). Residues 41–52 are compositionally biased toward low complexity; that stretch reads TNSTVSSSRSST. ATP is bound by residues N120, N149, 177 to 179, and 190 to 197; these read SSN and GRNGFGAK. Positions 382–389 are interaction with DNA; sequence SKKEKGKK. Position 418–420 (418–420) interacts with ATP; sequence QTK. The region spanning 498-614 is the Toprim domain; the sequence is CTLILTEGLS…GLLDIPGFLL (117 aa). Positions 504, 583, and 585 each coordinate Mg(2+). One can recognise a Topo IIA-type catalytic domain in the interval 752–1226; the sequence is IPSVLDGFKP…SAKDLWNQDL (475 aa). Y842 serves as the catalytic O-(5'-phospho-DNA)-tyrosine intermediate. Residues 1024–1033 are interaction with DNA; sequence KLVSSLSLAN. Disordered regions lie at residues 1122–1155 and 1244–1461; these read DGKP…DVGN and RESL…IVDE. Over residues 1133-1153 the composition is skewed to acidic residues; it reads LTGDDADEEEETQEQEGDEDV. Residues 1251 to 1261 show a composition bias toward basic residues; sequence GKKKSTKRRAK. Composition is skewed to basic and acidic residues over residues 1274–1283 and 1406–1417; these read VKVEPKEKKS and DKPEPKERRTRE. Residues 1434 to 1461 show a composition bias toward acidic residues; that stretch reads DSDDEDEDEEDDIVMSDGDDDDDFIVDE.

The protein belongs to the type II topoisomerase family. Homodimer. Mg(2+) is required as a cofactor. The cofactor is Mn(2+). Requires Ca(2+) as cofactor.

It is found in the nucleus. It catalyses the reaction ATP-dependent breakage, passage and rejoining of double-stranded DNA.. In terms of biological role, control of topological states of DNA by transient breakage and subsequent rejoining of DNA strands. Topoisomerase II makes double-strand breaks. This Candida albicans (Yeast) protein is DNA topoisomerase 2 (TOP2).